A 379-amino-acid polypeptide reads, in one-letter code: Cytochrome b (379 aa).

4 consecutive transmembrane segments (helical) span residues 33-53, 77-98, 113-133, and 178-198; these read FGSL…FLAM, WLIR…YLHI, WNIG…GYVL, and FFAF…LHLL. Heme b is bound by residues His83 and His97. Residues His182 and His196 each contribute to the heme b site. His201 lines the a ubiquinone pocket. 4 helical membrane-spanning segments follow: residues 226–246, 288–308, 320–340, and 347–367; these read YKDL…ALFY, LGGV…PILH, ASQL…WIGG, and YIII…VLNP.

Belongs to the cytochrome b family. The cytochrome bc1 complex contains 3 respiratory subunits (MT-CYB, CYC1 and UQCRFS1), 2 core proteins (UQCRC1 and UQCRC2) and probably 6 low-molecular weight proteins. Requires heme b as cofactor.

It is found in the mitochondrion inner membrane. Its function is as follows. Component of the ubiquinol-cytochrome c reductase complex (complex III or cytochrome b-c1 complex) that is part of the mitochondrial respiratory chain. The b-c1 complex mediates electron transfer from ubiquinol to cytochrome c. Contributes to the generation of a proton gradient across the mitochondrial membrane that is then used for ATP synthesis. The chain is Cytochrome b (mt-cyb) from Anguilla anguilla (European freshwater eel).